The chain runs to 426 residues: Mothers against decapentaplegic homolog 7 (426 aa).

The interval 13–55 is disordered; the sequence is LWRSRAPGGEDEEEGAGGGGGGGELRGEGATDSRAHGAGGGGP. Basic and acidic residues predominate over residues 37 to 47; it reads LRGEGATDSRA. An N6-acetyllysine; alternate mark is found at Lys-64 and Lys-70. Residues Lys-64 and Lys-70 each participate in a glycyl lysine isopeptide (Lys-Gly) (interchain with G-Cter in ubiquitin); alternate cross-link. The MH1 domain maps to 64–207; the sequence is KAVRGAKGHH…LSRLCELESP (144 aa). Zn(2+) contacts are provided by Cys-125, Cys-180, Cys-192, and His-197. The PY-motif motif lies at 208–211; sequence PPPY. An important for interaction with SMURF2 region spans residues 208–217; sequence PPPYSRYPMD. Phosphoserine is present on Ser-249. In terms of domain architecture, MH2 spans 261–426; that stretch reads WCVVAYWEEK…CWLEVIFNSR (166 aa).

This sequence belongs to the dwarfin/SMAD family. In terms of assembly, interacts with WWP1. Interacts with COPS5. Interacts with NEDD4L. Interacts with STAMBP. Interacts with RNF111, AXIN1 and AXIN2. Interacts with PPP1R15A. Interacts (via MH2 domain) with EP300. Interacts with ACVR1B, SMURF1, SMURF2 and TGFBR1; SMAD7 recruits SMURF1 and SMURF2 to the TGF-beta receptor and regulates its degradation. Interacts with PDPK1 (via PH domain). Interacts with TSC22D1/TSC-22; the interaction requires TGF-beta and the interaction is inhibited by TGFBR1. Phosphorylation on Ser-249 does not affect its stability, nuclear localization or inhibitory function in TGFB signaling; however it affects its ability to regulate transcription. Phosphorylated by PDPK1. Post-translationally, ubiquitinated by WWP1. Polyubiquitinated by RNF111, which is enhanced by AXIN1 and promotes proteasomal degradation. In response to TGF-beta, ubiquitinated by SMURF1; which promotes its degradation. In terms of processing, acetylation prevents ubiquitination and degradation mediated by SMURF1. Ubiquitous with higher expression in the lung and vascular endothelium.

The protein resides in the nucleus. It is found in the cytoplasm. Antagonist of signaling by TGF-beta (transforming growth factor) type 1 receptor superfamily members; has been shown to inhibit TGF-beta (Transforming growth factor) and activin signaling by associating with their receptors thus preventing SMAD2 access. Functions as an adapter to recruit SMURF2 to the TGF-beta receptor complex. Also acts by recruiting the PPP1R15A-PP1 complex to TGFBR1, which promotes its dephosphorylation. Positively regulates PDPK1 kinase activity by stimulating its dissociation from the 14-3-3 protein YWHAQ which acts as a negative regulator. The chain is Mothers against decapentaplegic homolog 7 (SMAD7) from Homo sapiens (Human).